The primary structure comprises 517 residues: Putative thymidine phosphorylase (517 aa).

Belongs to the thymidine/pyrimidine-nucleoside phosphorylase family. Type 2 subfamily.

The catalysed reaction is thymidine + phosphate = 2-deoxy-alpha-D-ribose 1-phosphate + thymine. This Legionella pneumophila subsp. pneumophila (strain Philadelphia 1 / ATCC 33152 / DSM 7513) protein is Putative thymidine phosphorylase.